The primary structure comprises 294 residues: Cytidine deaminase (294 aa).

CMP/dCMP-type deaminase domains are found at residues 48–168 and 186–294; these read DEDA…FGPK and LTGD…VLLG. 89-91 is a substrate binding site; sequence NME. H102 serves as a coordination point for Zn(2+). E104 acts as the Proton donor in catalysis. Residues C129 and C132 each contribute to the Zn(2+) site.

Belongs to the cytidine and deoxycytidylate deaminase family. In terms of assembly, homodimer. Zn(2+) serves as cofactor.

The catalysed reaction is cytidine + H2O + H(+) = uridine + NH4(+). The enzyme catalyses 2'-deoxycytidine + H2O + H(+) = 2'-deoxyuridine + NH4(+). This enzyme scavenges exogenous and endogenous cytidine and 2'-deoxycytidine for UMP synthesis. This is Cytidine deaminase from Salmonella dublin (strain CT_02021853).